A 349-amino-acid chain; its full sequence is 11-beta-hydroxysteroid dehydrogenase A (349 aa).

A helical; Signal-anchor for type II membrane protein transmembrane segment spans residues 10-30 (LVAPPFTFFFLCLFLPPYWGL). The short motif at 13–26 (PPFTFFFLCLFLPP) is the Proline-knob element. NADP(+) contacts are provided by residues 54 to 80 (GASS…SARR), Asp105, and 132 to 135 (NAAI). Ser184 contacts substrate. Tyr197 serves as the catalytic Proton acceptor. Residues 197-201 (YSASK) and Lys201 each bind NADP(+).

The protein belongs to the short-chain dehydrogenases/reductases (SDR) family. Expressed in seeds (at protein level).

The protein resides in the lipid droplet. The protein localises to the membrane. It carries out the reaction an 11beta-hydroxysteroid + NADP(+) = an 11-oxosteroid + NADPH + H(+). In terms of biological role, has dehydrogenase activity against 11 beta-hydroxysteroid and 17 beta-hydroxysteroid. May be involved in signal transduction regulated by various sterols. This Arachis hypogaea (Peanut) protein is 11-beta-hydroxysteroid dehydrogenase A.